A 191-amino-acid polypeptide reads, in one-letter code: Photosystem I assembly protein Ycf4 (191 aa).

The next 2 helical transmembrane spans lie at 33–53 and 74–94; these read LLAV…LSSY and LVMG…WAMI.

Belongs to the Ycf4 family.

It is found in the cellular thylakoid membrane. Seems to be required for the assembly of the photosystem I complex. This is Photosystem I assembly protein Ycf4 from Prochlorococcus marinus (strain MIT 9303).